The sequence spans 701 residues: Sodium/hydrogen exchanger 6 (701 aa).

The next 2 helical transmembrane spans lie at 71–91 (SANL…IWLF) and 103–123 (GLAM…IHVP). Residue Asn-128 is glycosylated (N-linked (GlcNAc...) asparagine). 8 helical membrane-spanning segments follow: residues 176–196 (VTFD…FYAG), 211–231 (ILAY…SIMY), 252–272 (CLLF…AIFH), 278–298 (VELY…AIVL), 324–344 (IGIF…TGVV), 372–392 (TFLL…FCGI), 414–434 (FELL…LTLF), and 436–456 (FQNH…IFLG). Residue Lys-475 forms a Glycyl lysine isopeptide (Lys-Gly) (interchain with G-Cter in ubiquitin) linkage. 2 helical membrane-spanning segments follow: residues 479–499 (NFQH…ALAI) and 515–535 (LLIV…MLSC).

This sequence belongs to the monovalent cation:proton antiporter 1 (CPA1) transporter (TC 2.A.36) family. In terms of assembly, homodimer. Interacts with RACK1; regulates the distribution of SLC9A6 between endosomes and the plasma membrane. Post-translationally, ubiquitinated (in vitro). In terms of processing, glycosylated. In terms of tissue distribution, ubiquitous. High expression in brain, skeletal muscle, and heart, but is also detected at lower levels in most other tissues.

The protein resides in the endosome membrane. It localises to the recycling endosome membrane. It is found in the early endosome membrane. The protein localises to the late endosome membrane. Its subcellular location is the cell membrane. The enzyme catalyses Na(+)(in) + H(+)(out) = Na(+)(out) + H(+)(in). It catalyses the reaction K(+)(in) + H(+)(out) = K(+)(out) + H(+)(in). Functionally, endosomal Na(+), K(+)/H(+) antiporter. Mediates the electroneutral exchange of endosomal luminal H(+) for a cytosolic Na(+) or K(+). By facilitating proton efflux, SLC9A6 counteracts the acidity generated by vacuolar (V)-ATPase, thereby limiting luminal acidification. Responsible for alkalizing and maintaining the endosomal pH, and consequently in, e.g., endosome maturation and trafficking of recycling endosomal cargo. Plays a critical role during neurodevelopment by regulating synaptic development and plasticity. Implicated in the maintenance of cell polarity in a manner that is dependent on its ability to modulate intravesicular pH. Regulates intracelular pH in some specialized cells, osteoclasts and stereocilia where this transporter localizes to the plasma membrane. This chain is Sodium/hydrogen exchanger 6, found in Homo sapiens (Human).